The following is a 740-amino-acid chain: DNA (cytosine-5)-methyltransferase 3C (740 aa).

2 disordered regions span residues 75–99 and 248–312; these read LTGDGDEDRDGEVGGSSGSGTPVMP and FKPT…DVTN. Residues 309–441 enclose the ADD domain; it reads DVTNNKGNLE…LQDFFTTDPD (133 aa). The segment at 320 to 350 adopts a GATA-type; atypical zinc-finger fold; sequence HCLSCGRKDPVSFHPLFEGGLCQSCRDRFLE. Residues 361-417 form a PHD-type; atypical zinc finger; it reads QSYCTVCCEGRELLLCSNTSCCRCFCVECLEVLVGAGTAEDVKLQEPWSCYMCLPQR. The region spanning 462 to 740 is the SAM-dependent MTase C5-type domain; that stretch reads IRVLSLFDGI…APLKDHFACE (279 aa). S-adenosyl-L-methionine-binding residues include I471, T473, E492, D514, and I515. C538 is a catalytic residue. R719 and W721 together coordinate S-adenosyl-L-methionine.

Belongs to the class I-like SAM-binding methyltransferase superfamily. C5-methyltransferase family. Homodimer. Interacts with DNMT3L. Interacts with SPOCD1; recruiting Dnmt3C to transposons. Specifically expressed in testis.

It localises to the nucleus. It catalyses the reaction a 2'-deoxycytidine in DNA + S-adenosyl-L-methionine = a 5-methyl-2'-deoxycytidine in DNA + S-adenosyl-L-homocysteine + H(+). Its function is as follows. DNA methyltransferase that specifically methylates the promoters of evolutionarily young retrotransposons in the male germline. De novo methylation and subsequent repression of transposable elements prevents their mobilization, which is essential for germline integrity. Compared to Dnmt3a and Dnmt3b, shows lower DNA methyltransferase efficiency. The sequence is that of DNA (cytosine-5)-methyltransferase 3C from Mus musculus (Mouse).